A 370-amino-acid polypeptide reads, in one-letter code: MATSPYPLVAPEIAGSPSRPRIVAALSGGVDSSTVAAILHEQGYAVEGVTLWLMRGKGQCCTDGLVDAAAICEQLGIPHHIVDSRELFQANIVDYLVAGYADGITPLPCSQCNKLVKFGPLLTYARETLGISQIATGHYARVRFNSELGRYQLLRAVDRQKDQSYFLYDLSQEHLAHSLFPLGNYTKAQTRQIAARYGLVTANKPESQDLCLIETYGSMRNFLDQHLGQRPGEIVDTQGRVLGSHQGIHHYTVGQRKGLGIASSRPLYVVRIDAAMNRVVVGEREEATQAEAWVRQVNWVSTPAPDEPLAVEVQVRYRTPAVPATLIPESPERVKLQFAEPQFGVTPGQAAVWYHGDLLLGGGILERPSP.

Residues 25-32 (ALSGGVDS) and L51 contribute to the ATP site. The active-site Nucleophile is C112. C112 and C211 are joined by a disulfide. G137 contacts ATP. Residues 161–163 (KDQ) form an interaction with tRNA region. C211 serves as the catalytic Cysteine persulfide intermediate. The tract at residues 316–317 (RY) is interaction with tRNA.

It belongs to the MnmA/TRMU family.

The protein localises to the cytoplasm. The enzyme catalyses S-sulfanyl-L-cysteinyl-[protein] + uridine(34) in tRNA + AH2 + ATP = 2-thiouridine(34) in tRNA + L-cysteinyl-[protein] + A + AMP + diphosphate + H(+). Its function is as follows. Catalyzes the 2-thiolation of uridine at the wobble position (U34) of tRNA, leading to the formation of s(2)U34. This is tRNA-specific 2-thiouridylase MnmA from Synechococcus sp. (strain JA-3-3Ab) (Cyanobacteria bacterium Yellowstone A-Prime).